Here is a 459-residue protein sequence, read N- to C-terminus: tRNA modification GTPase MnmE (459 aa).

(6S)-5-formyl-5,6,7,8-tetrahydrofolate contacts are provided by Arg22, Glu85, and Arg124. The TrmE-type G domain occupies 221-380; it reads GLSTVIVGKP…LEIQIRDLFF (160 aa). Asn231 serves as a coordination point for K(+). GTP-binding positions include 231 to 236, 250 to 256, and 275 to 278; these read NVGKSS, TEVAGTT, and DTAG. Residue Ser235 coordinates Mg(2+). 3 residues coordinate K(+): Thr250, Val252, and Thr255. Thr256 serves as a coordination point for Mg(2+). Lys459 serves as a coordination point for (6S)-5-formyl-5,6,7,8-tetrahydrofolate.

The protein belongs to the TRAFAC class TrmE-Era-EngA-EngB-Septin-like GTPase superfamily. TrmE GTPase family. As to quaternary structure, homodimer. Heterotetramer of two MnmE and two MnmG subunits. K(+) is required as a cofactor.

It is found in the cytoplasm. Functionally, exhibits a very high intrinsic GTPase hydrolysis rate. Involved in the addition of a carboxymethylaminomethyl (cmnm) group at the wobble position (U34) of certain tRNAs, forming tRNA-cmnm(5)s(2)U34. The protein is tRNA modification GTPase MnmE of Staphylococcus aureus (strain Mu3 / ATCC 700698).